The chain runs to 418 residues: Probable basic-leucine zipper transcription factor E (418 aa).

A coiled-coil region spans residues 8 to 47 (IQQIQQLHMLLQQQQQQQQQQQQQQQQQQQQLQQQNFQLT). Low complexity-rich tracts occupy residues 51–71 (FQIP…NNNN) and 95–134 (INTT…NNNT). 4 disordered regions span residues 51–75 (FQIP…ETAF), 95–149 (INTT…KKQK), 165–196 (PTAA…TTNT), and 211–252 (KNQE…KNRR). A compositionally biased stretch (basic residues) spans 169 to 179 (VKKKPPAKKSA). Residues 180–196 (KNAASQPTSPTLSTTNT) show a composition bias toward low complexity. The span at 220–239 (DNSEESDSDEEDFENGDNEN) shows a compositional bias: acidic residues. Residues 246–309 (GDRKNRRLLK…QLMKDKVRYL (64 aa)) enclose the bZIP domain. Positions 248 to 268 (RKNRRLLKNREAAQLFRQRQK) are basic motif. The tract at residues 274-281 (LESKASSL) is leucine-zipper. Residues 324–362 (SVVNQDNINNLNNNLNGLQNQQNNNNNNNNNNNNNNNNN) adopt a coiled-coil conformation. Positions 336–418 (NNLNGLQNQQ…DSLLFNLPPD (83 aa)) are disordered.

Belongs to the bZIP family.

It is found in the nucleus. Functionally, probable transcriptional regulator. This is Probable basic-leucine zipper transcription factor E (bzpE) from Dictyostelium discoideum (Social amoeba).